The sequence spans 235 residues: RNA polymerase sigma-E factor (235 aa).

The Polymerase core binding signature appears at 82–95 (DLISVGTIGLIKAV). Residues 202–221 (QKEVADMLGISQSYISRLEK) constitute a DNA-binding region (H-T-H motif).

The protein belongs to the sigma-70 factor family.

In terms of biological role, sigma factors are initiation factors that promote the attachment of RNA polymerase to specific initiation sites and are then released. This sigma factor is responsible for the expression of sporulation specific genes. This chain is RNA polymerase sigma-E factor (sigE), found in Clostridium acetobutylicum (strain ATCC 824 / DSM 792 / JCM 1419 / IAM 19013 / LMG 5710 / NBRC 13948 / NRRL B-527 / VKM B-1787 / 2291 / W).